Here is a 1395-residue protein sequence, read N- to C-terminus: DNA polymerase II large subunit (1395 aa).

Disordered regions lie at residues I279–E320 and G657–T704. The segment covering E283–E312 has biased composition (acidic residues). Composition is skewed to basic and acidic residues over residues G661–L671 and D690–D700.

It belongs to the archaeal DNA polymerase II family. Heterodimer of a large subunit and a small subunit. In terms of processing, this protein undergoes a protein self splicing that involves a post-translational excision of the intervening region (intein) followed by peptide ligation.

The enzyme catalyses DNA(n) + a 2'-deoxyribonucleoside 5'-triphosphate = DNA(n+1) + diphosphate. The catalysed reaction is Exonucleolytic cleavage in the 3'- to 5'-direction to yield nucleoside 5'-phosphates.. In terms of biological role, possesses two activities: a DNA synthesis (polymerase) and an exonucleolytic activity that degrades single-stranded DNA in the 3'- to 5'-direction. Has a template-primer preference which is characteristic of a replicative DNA polymerase. The chain is DNA polymerase II large subunit from Haloarcula marismortui (strain ATCC 43049 / DSM 3752 / JCM 8966 / VKM B-1809) (Halobacterium marismortui).